A 274-amino-acid chain; its full sequence is Pyridoxal phosphate homeostasis protein (274 aa).

Residue Ser6 is modified to Phosphoserine. Position 47 is an N6-(pyridoxal phosphate)lysine (Lys47). A Phosphotyrosine modification is found at Tyr69. At Lys125 the chain carries N6-succinyllysine. A phosphoserine mark is found at Ser226 and Ser244.

Belongs to the pyridoxal phosphate-binding protein YggS/PROSC family.

Pyridoxal 5'-phosphate (PLP)-binding protein, which may be involved in intracellular homeostatic regulation of pyridoxal 5'-phosphate (PLP), the active form of vitamin B6. The sequence is that of Pyridoxal phosphate homeostasis protein from Mus musculus (Mouse).